The chain runs to 36 residues: Insecticidal toxin LaIT1 (36 aa).

Intrachain disulfides connect Cys-11–Cys-23 and Cys-17–Cys-29.

In terms of tissue distribution, expressed by the venom gland.

It is found in the secreted. Its function is as follows. Affects the activity of both ryanodine-sensitive calcium-release channels RyR1 and RyR2 with high potency. At lower concentrations the toxin increases full openings of the RyRs, and at higher concentrations it inhibits full openings and induce openings to subconductance levels and reduces the number of full conductance openings. The different actions may be attributed to the toxins binding at different sites on the RyRs, with binding at a high-affinity site mediating the increase in full openings and the induction of subconductance states evoked upon binding to a lower-affinity site. Shows insect lethality against crickets and common cutworms (only shows paralysis against cockroaches), but no toxicity is observed in mice. The protein is Insecticidal toxin LaIT1 of Liocheles australasiae (Dwarf wood scorpion).